Here is a 266-residue protein sequence, read N- to C-terminus: MGLLSVDLLITLQILPVFFSNCLFLALYDSVILLKHVALLLSRSKSTRGEWRRMLTSEGLRCVWNSFLLDAYKQVKLGEDAPNSSVVHVSNPESGNNYASEKTADGAECHLLDFASAERPLVVNFGSATUPPFTRQLPAFRQLVEEFSSVADFLLVYIDEAHPSDGWAVPGDSSLSFEVKKHRNQEDRCAAAHQLLERFSLPPQCQVVADRMDNNANVAYGVAFERVCIVQRRKIAYLGGKGPFSYNLQEVRSWLEKNFSKRUILD.

At Met-1–Leu-9 the chain is on the lumenal side. The helical; Signal-anchor for type III membrane protein transmembrane segment at Ile-10–Leu-34 threads the bilayer. Topologically, residues Lys-35–Asp-266 are cytoplasmic. Sec-130 is an active-site residue. Non-standard amino acids (selenocysteine) are located at Sec-130 and Sec-263.

This sequence belongs to the iodothyronine deiodinase family. In terms of assembly, predominantly monomer. Can form homodimers but homodimerization is not essential for enzyme activity. Interacts with USP20 and USP33. Interacts with MARCHF6. Ubiquitinated by MARCHF6, leading to its degradation by the proteasome. Deubiquitinated by USP20 and USP33. In terms of tissue distribution, expressed in mammary gland and in brain.

It is found in the endoplasmic reticulum membrane. It carries out the reaction 3,3',5-triiodo-L-thyronine + iodide + A + H(+) = L-thyroxine + AH2. It catalyses the reaction 3,3'-diiodo-L-thyronine + iodide + A + H(+) = 3,3',5'-triiodo-L-thyronine + AH2. The catalysed reaction is 3'-iodo-L-thyronine + iodide + A + H(+) = 3',5'-diiodo-L-thyronine + AH2. The enzyme catalyses 3,3'-diiodothyronamine + iodide + A + H(+) = 3,3',5'-triiodothyronamine + AH2. It carries out the reaction 3'-iodothyronamine + iodide + A + H(+) = 3',5'-diiodothyronamine + AH2. In terms of biological role, plays a crucial role in the metabolism of thyroid hormones (TH) and has specific roles in TH activation and inactivation by deiodination. Catalyzes the deiodination of L-thyroxine (T4) to 3,5,3'-triiodothyronine (T3) and 3,3',5'-triiodothyronine (rT3) to 3,3'-diiodothyronine (3,3'-T2) via outer-ring deiodination (ORD). Catalyzes the deiodination of 3',5'-diiodothyronine (3',5'-T2) to 3'-monoiodothyronine (3'-T1) via ORD. Catalyzes the phenolic ring deiodinations of 3,3',5'-triiodothyronamine and 3',5'- diiodothyronamine. The protein is Type II iodothyronine deiodinase (Dio2) of Mus musculus (Mouse).